The chain runs to 231 residues: Non-fluorescent flavoprotein (231 aa).

This sequence belongs to the bacterial luciferase oxidoreductase family. In terms of assembly, homodimer. Requires FMN as cofactor.

The polypeptide is Non-fluorescent flavoprotein (luxF) (Photobacterium phosphoreum).